A 294-amino-acid chain; its full sequence is NADH-cytochrome b5 reductase 1 (294 aa).

The helical transmembrane segment at 13 to 33 threads the bilayer; it reads PHASFLGGLVVAAILGLFIFF. Positions 44 to 147 constitute an FAD-binding FR-type domain; the sequence is VEWRSFKLVD…KGPKGKFVYT (104 aa). FAD contacts are provided by residues 127 to 142 and 153 to 185; these read SLLTIGQEIKVKGPKG and HLVMIAGGTGITPMYQIIKSSIKTPGDKTRLSL.

This sequence belongs to the flavoprotein pyridine nucleotide cytochrome reductase family. In terms of assembly, monomer. Component of the 2-(3-amino-3-carboxypropyl)histidine synthase complex composed of DPH1, DPH2, DPH3 and a NADH-dependent reductase, predominantly CBR1. FAD is required as a cofactor.

It is found in the mitochondrion outer membrane. It carries out the reaction 2 Fe(III)-[cytochrome b5] + NADH = 2 Fe(II)-[cytochrome b5] + NAD(+) + H(+). The enzyme catalyses 2 Fe(3+)-[Dph3] + NADH = 2 Fe(2+)-[Dph3] + NAD(+) + H(+). It participates in protein modification; peptidyl-diphthamide biosynthesis. In terms of biological role, NADH-dependent reductase for DPH3 and cytochrome b5. Required for the first step of diphthamide biosynthesis, a post-translational modification of histidine which occurs in elongation factor 2. DPH1 and DPH2 transfer a 3-amino-3-carboxypropyl (ACP) group from S-adenosyl-L-methionine (SAM) to a histidine residue, the reaction is assisted by a reduction system comprising DPH3 and a NADH-dependent reductase, predominantly CBR1. By reducing DPH3, also involved in the formation of the tRNA wobble base modification mcm5s 2U (5-methoxycarbonylmethyl-2-thiouridine), mediated by the elongator complex. The cytochrome b5/NADH cytochrome b5 reductase electron transfer system supports the catalytic activity of several sterol biosynthetic enzymes. This chain is NADH-cytochrome b5 reductase 1 (CBR1), found in Cryptococcus neoformans var. neoformans serotype D (strain B-3501A) (Filobasidiella neoformans).